The primary structure comprises 1089 residues: GPI ethanolamine phosphate transferase 3, catalytic subunit (1089 aa).

Residues 4–24 traverse the membrane as a helical segment; that stretch reads ASVLLFLAWVCFLFYAGIALF. Residue Asn268 is glycosylated (N-linked (GlcNAc...) asparagine). Helical transmembrane passes span 457-477, 482-502, 510-530, 541-561, 575-595, 668-688, 701-721, 747-767, 830-850, 857-877, 944-964, 1014-1034, and 1048-1068; these read LLAA…SPGF, LLLT…GLLG, LVLL…WKAW, TLFP…AVFF, FLLG…GQLL, LWYG…RLWL, MLFV…YWAL, VAGL…TVLV, SVYS…LLLL, LVFL…AAGI, FASH…PFLC, LKYL…ASIL, and FIFE…GIAL.

The protein belongs to the PIGG/PIGN/PIGO family. PIGO subfamily. In terms of assembly, part of the ethanolamine phosphate transferase 3 complex composed by PIGO and PIGF. PIGF is required to stabilize PIGO.

The protein resides in the endoplasmic reticulum membrane. It functions in the pathway glycolipid biosynthesis; glycosylphosphatidylinositol-anchor biosynthesis. In terms of biological role, catalytic subunit of the ethanolamine phosphate transferase 3 complex that transfers an ethanolamine phosphate (EtNP) from a phosphatidylethanolamine (PE) to the 6-OH position of the third alpha-1,2-linked mannose of an alpha-D-Man-(1-&gt;2)-alpha-D-Man-(1-&gt;6)-2-PEtn-alpha-D-Man-(1-&gt;4)-alpha-D-GlcN-(1-&gt;6)-(1-radyl,2-acyl-sn-glycero-3-phospho)-2-acyl-inositol (also termed H6) intermediate to generate a 6-PEtn-alpha-D-Man-(1-&gt;2)-alpha-D-Man-(1-&gt;6)-2-PEtn-alpha-D-Man-(1-&gt;4)-alpha-D-GlcN-(1-&gt;6)-(1-radyl,2-acyl-sn-glycero-3-phospho)-2-acyl-inositol (also termed H7) and participates in the tenth step of the glycosylphosphatidylinositol-anchor biosynthesis. This Homo sapiens (Human) protein is GPI ethanolamine phosphate transferase 3, catalytic subunit.